A 224-amino-acid chain; its full sequence is 7-cyano-7-deazaguanine synthase (224 aa).

12–22 (LSGGLDSSTVT) contacts ATP. Zn(2+) is bound by residues cysteine 193, cysteine 201, cysteine 204, and cysteine 207.

It belongs to the QueC family. Zn(2+) is required as a cofactor.

The enzyme catalyses 7-carboxy-7-deazaguanine + NH4(+) + ATP = 7-cyano-7-deazaguanine + ADP + phosphate + H2O + H(+). The protein operates within purine metabolism; 7-cyano-7-deazaguanine biosynthesis. Functionally, catalyzes the ATP-dependent conversion of 7-carboxy-7-deazaguanine (CDG) to 7-cyano-7-deazaguanine (preQ(0)). The sequence is that of 7-cyano-7-deazaguanine synthase from Prochlorococcus marinus (strain MIT 9215).